The primary structure comprises 165 residues: Large ribosomal subunit protein uL10 (165 aa).

It belongs to the universal ribosomal protein uL10 family. As to quaternary structure, part of the ribosomal stalk of the 50S ribosomal subunit. The N-terminus interacts with L11 and the large rRNA to form the base of the stalk. The C-terminus forms an elongated spine to which L12 dimers bind in a sequential fashion forming a multimeric L10(L12)X complex.

Forms part of the ribosomal stalk, playing a central role in the interaction of the ribosome with GTP-bound translation factors. This chain is Large ribosomal subunit protein uL10, found in Burkholderia thailandensis (strain ATCC 700388 / DSM 13276 / CCUG 48851 / CIP 106301 / E264).